The following is a 303-amino-acid chain: Bifunctional protein FolD (303 aa).

NADP(+)-binding positions include 165–167 (GRS), Ser190, and Ile231.

This sequence belongs to the tetrahydrofolate dehydrogenase/cyclohydrolase family. In terms of assembly, homodimer.

It carries out the reaction (6R)-5,10-methylene-5,6,7,8-tetrahydrofolate + NADP(+) = (6R)-5,10-methenyltetrahydrofolate + NADPH. The catalysed reaction is (6R)-5,10-methenyltetrahydrofolate + H2O = (6R)-10-formyltetrahydrofolate + H(+). Its pathway is one-carbon metabolism; tetrahydrofolate interconversion. Its function is as follows. Catalyzes the oxidation of 5,10-methylenetetrahydrofolate to 5,10-methenyltetrahydrofolate and then the hydrolysis of 5,10-methenyltetrahydrofolate to 10-formyltetrahydrofolate. This chain is Bifunctional protein FolD, found in Prochlorococcus marinus (strain NATL1A).